Reading from the N-terminus, the 357-residue chain is Membrane-bound lytic murein transglycosylase C (357 aa).

Residues 1–16 (MKKMLALLVIAPLLVS) form the signal peptide. Cys17 carries the N-palmitoyl cysteine lipid modification. Cys17 is lipidated: S-diacylglycerol cysteine.

This sequence belongs to the transglycosylase Slt family.

It is found in the cell outer membrane. The catalysed reaction is Exolytic cleavage of the (1-&gt;4)-beta-glycosidic linkage between N-acetylmuramic acid (MurNAc) and N-acetylglucosamine (GlcNAc) residues in peptidoglycan, from either the reducing or the non-reducing ends of the peptidoglycan chains, with concomitant formation of a 1,6-anhydrobond in the MurNAc residue.. Its function is as follows. Murein-degrading enzyme. May play a role in recycling of muropeptides during cell elongation and/or cell division. This is Membrane-bound lytic murein transglycosylase C from Pectobacterium atrosepticum (strain SCRI 1043 / ATCC BAA-672) (Erwinia carotovora subsp. atroseptica).